The primary structure comprises 461 residues: Cysteine--tRNA ligase (461 aa).

Cysteine 28 contributes to the Zn(2+) binding site. Residues 30–40 (ITIYDLCHIGH) carry the 'HIGH' region motif. Cysteine 209, histidine 234, and glutamate 238 together coordinate Zn(2+). The short motif at 266–270 (KMSKS) is the 'KMSKS' region element. Lysine 269 serves as a coordination point for ATP.

Belongs to the class-I aminoacyl-tRNA synthetase family. In terms of assembly, monomer. It depends on Zn(2+) as a cofactor.

It is found in the cytoplasm. It carries out the reaction tRNA(Cys) + L-cysteine + ATP = L-cysteinyl-tRNA(Cys) + AMP + diphosphate. The protein is Cysteine--tRNA ligase of Yersinia pseudotuberculosis serotype IB (strain PB1/+).